The primary structure comprises 227 residues: Uracil-DNA glycosylase (227 aa).

The Proton acceptor role is filled by Asp-68.

The protein belongs to the uracil-DNA glycosylase (UDG) superfamily. UNG family.

Its subcellular location is the cytoplasm. The enzyme catalyses Hydrolyzes single-stranded DNA or mismatched double-stranded DNA and polynucleotides, releasing free uracil.. In terms of biological role, excises uracil residues from the DNA which can arise as a result of misincorporation of dUMP residues by DNA polymerase or due to deamination of cytosine. This chain is Uracil-DNA glycosylase, found in Mycobacterium ulcerans (strain Agy99).